Here is a 449-residue protein sequence, read N- to C-terminus: Exodeoxyribonuclease 7 large subunit (449 aa).

It belongs to the XseA family. As to quaternary structure, heterooligomer composed of large and small subunits.

The protein resides in the cytoplasm. It catalyses the reaction Exonucleolytic cleavage in either 5'- to 3'- or 3'- to 5'-direction to yield nucleoside 5'-phosphates.. Its function is as follows. Bidirectionally degrades single-stranded DNA into large acid-insoluble oligonucleotides, which are then degraded further into small acid-soluble oligonucleotides. The sequence is that of Exodeoxyribonuclease 7 large subunit from Aliivibrio fischeri (strain MJ11) (Vibrio fischeri).